The primary structure comprises 147 residues: Large ribosomal subunit protein uL15 (147 aa).

Residues methionine 1–valine 46 form a disordered region. The segment covering lysine 16–glycine 28 has biased composition (basic residues).

It belongs to the universal ribosomal protein uL15 family. Part of the 50S ribosomal subunit.

Functionally, binds to the 23S rRNA. In Mesomycoplasma hyopneumoniae (strain J / ATCC 25934 / NCTC 10110) (Mycoplasma hyopneumoniae), this protein is Large ribosomal subunit protein uL15.